Consider the following 102-residue polypeptide: Keratin-associated protein 25-1 (102 aa).

Belongs to the PMG family. In terms of assembly, interacts with hair keratins.

In the hair cortex, hair keratin intermediate filaments are embedded in an interfilamentous matrix, consisting of hair keratin-associated proteins (KRTAP), which are essential for the formation of a rigid and resistant hair shaft through their extensive disulfide bond cross-linking with abundant cysteine residues of hair keratins. The matrix proteins include the high-sulfur and high-glycine-tyrosine keratins. This chain is Keratin-associated protein 25-1 (KRTAP25-1), found in Homo sapiens (Human).